We begin with the raw amino-acid sequence, 101 residues long: HNMFLEGTLLKPNMVTAGQGCPKKYTPEDIARATVTALNRTVPAAVAGITFLSGGQSEEDATINLNAINQFPGRKPWPLTFSYGRALQASVLKAWGGKDEL.

Lys-11 functions as the Schiff-base intermediate with dihydroxyacetone-P in the catalytic mechanism.

Belongs to the class I fructose-bisphosphate aldolase family.

The catalysed reaction is beta-D-fructose 1,6-bisphosphate = D-glyceraldehyde 3-phosphate + dihydroxyacetone phosphate. It functions in the pathway carbohydrate degradation; glycolysis; D-glyceraldehyde 3-phosphate and glycerone phosphate from D-glucose: step 4/4. The sequence is that of Fructose-bisphosphate aldolase from Lymnaea stagnalis (Great pond snail).